The primary structure comprises 99 residues: MPDQIQIEVVYALPMRQTTLTLKINTGSSVEDAIRESGILARHPEIDLAVNKVGLFGRAVALSTRLERPTRIEIYRPLLADPKEIRRQRAEKAKLQSLK.

This sequence belongs to the UPF0125 (RnfH) family.

This Tolumonas auensis (strain DSM 9187 / NBRC 110442 / TA 4) protein is Protein RnfH.